Reading from the N-terminus, the 339-residue chain is Ketol-acid reductoisomerase (NADP(+)) (339 aa).

Residues 1 to 182 (MRVYYDRDAD…GGGRSGIIET (182 aa)) form the KARI N-terminal Rossmann domain. Residues 24 to 27 (YGSQ), R48, S51, S53, and 83 to 86 (DELQ) contribute to the NADP(+) site. Residue H108 is part of the active site. Residue G134 participates in NADP(+) binding. The 146-residue stretch at 183–328 (TFREECETDL…EKLRGMMPWI (146 aa)) folds into the KARI C-terminal knotted domain. Mg(2+) is bound by residues D191, E195, E227, and E231. S252 is a binding site for substrate.

This sequence belongs to the ketol-acid reductoisomerase family. Requires Mg(2+) as cofactor.

It carries out the reaction (2R)-2,3-dihydroxy-3-methylbutanoate + NADP(+) = (2S)-2-acetolactate + NADPH + H(+). The catalysed reaction is (2R,3R)-2,3-dihydroxy-3-methylpentanoate + NADP(+) = (S)-2-ethyl-2-hydroxy-3-oxobutanoate + NADPH + H(+). It functions in the pathway amino-acid biosynthesis; L-isoleucine biosynthesis; L-isoleucine from 2-oxobutanoate: step 2/4. It participates in amino-acid biosynthesis; L-valine biosynthesis; L-valine from pyruvate: step 2/4. Involved in the biosynthesis of branched-chain amino acids (BCAA). Catalyzes an alkyl-migration followed by a ketol-acid reduction of (S)-2-acetolactate (S2AL) to yield (R)-2,3-dihydroxy-isovalerate. In the isomerase reaction, S2AL is rearranged via a Mg-dependent methyl migration to produce 3-hydroxy-3-methyl-2-ketobutyrate (HMKB). In the reductase reaction, this 2-ketoacid undergoes a metal-dependent reduction by NADPH to yield (R)-2,3-dihydroxy-isovalerate. This Magnetospirillum molischianum (Rhodospirillum molischianum) protein is Ketol-acid reductoisomerase (NADP(+)).